The sequence spans 150 residues: Male-specific protein scotti (150 aa).

Positions 60-84 are disordered; it reads PPMAVFPARGGPNGGPPRLRKKRSF. A glycan (N-linked (GlcNAc...) asparagine) is linked at Asn131.

This sequence belongs to the male-specific scotti family.

Post-meiotically transcribed gene that has a role in late spermiogenesis; required for actin cone progression during spermatid individualization. The chain is Male-specific protein scotti from Drosophila yakuba (Fruit fly).